The chain runs to 433 residues: Glutamate-1-semialdehyde 2,1-aminomutase (433 aa).

N6-(pyridoxal phosphate)lysine is present on K270.

Belongs to the class-III pyridoxal-phosphate-dependent aminotransferase family. HemL subfamily. In terms of assembly, homodimer. The cofactor is pyridoxal 5'-phosphate.

It is found in the cytoplasm. The catalysed reaction is (S)-4-amino-5-oxopentanoate = 5-aminolevulinate. Its pathway is porphyrin-containing compound metabolism; protoporphyrin-IX biosynthesis; 5-aminolevulinate from L-glutamyl-tRNA(Glu): step 2/2. This Symbiobacterium thermophilum (strain DSM 24528 / JCM 14929 / IAM 14863 / T) protein is Glutamate-1-semialdehyde 2,1-aminomutase.